A 99-amino-acid polypeptide reads, in one-letter code: Protein dpy-30 homolog (99 aa).

Met-1 carries the N-acetylmethionine modification. A disordered region spans residues 1 to 26 (MESEQMLEGQTQVAENPHSEYGLTDS). Ser-19 is modified (phosphoserine). Lys-35 carries the post-translational modification N6-acetyllysine; alternate. Lys-35 participates in a covalent cross-link: Glycyl lysine isopeptide (Lys-Gly) (interchain with G-Cter in SUMO2); alternate.

It belongs to the dpy-30 family. In terms of assembly, homodimer. Core component of several methyltransferase-containing complexes including MLL1/MLL, MLL2/3 (also named ASCOM complex) and MLL4/WBP7. Each complex is at least composed of ASH2L, RBBP5, WDR5, DPY30, one or more specific histone methyltransferases (KMT2A/MLL1, KMT2D/MLL2, KMT2C/MLL3 and KMT2B/MLL4), and the facultative components MEN1, HCFC1, HCFC2, NCOA6, KDM6A, PAXIP1/PTIP, PAGR1 and alpha- and beta-tubulin PAXIP1/PTIP, PAGR1 and alpha- and beta-tubulin. Interacts with ASH2L. The interaction with ASH2L is direct. Interacts with ARFGEF1. Component of the SET1 complex, at least composed of the catalytic subunit (SETD1A or SETD1B), WDR5, WDR82, RBBP5, ASH2L/ASH2, CXXC1/CFP1, HCFC1 and DPY30.

It localises to the nucleus. The protein resides in the golgi apparatus. Its subcellular location is the trans-Golgi network. Functionally, as part of the MLL1/MLL complex, involved in the methylation of histone H3 at 'Lys-4', particularly trimethylation. Histone H3 'Lys-4' methylation represents a specific tag for epigenetic transcriptional activation. May play some role in histone H3 acetylation. In embryonic stem (ES) cells, plays a crucial role in the differentiation potential, particularly along the neural lineage, regulating gene induction and histone H3 'Lys-4' methylation at key developmental loci, including that mediated by retinoic acid. Does not affect ES cell self-renewal. May also play an indirect or direct role in endosomal transport. This Mus musculus (Mouse) protein is Protein dpy-30 homolog (Dpy30).